Reading from the N-terminus, the 342-residue chain is S-adenosylmethionine:tRNA ribosyltransferase-isomerase (342 aa).

This sequence belongs to the QueA family. In terms of assembly, monomer.

Its subcellular location is the cytoplasm. The catalysed reaction is 7-aminomethyl-7-carbaguanosine(34) in tRNA + S-adenosyl-L-methionine = epoxyqueuosine(34) in tRNA + adenine + L-methionine + 2 H(+). It functions in the pathway tRNA modification; tRNA-queuosine biosynthesis. Its function is as follows. Transfers and isomerizes the ribose moiety from AdoMet to the 7-aminomethyl group of 7-deazaguanine (preQ1-tRNA) to give epoxyqueuosine (oQ-tRNA). In Streptococcus pneumoniae serotype 4 (strain ATCC BAA-334 / TIGR4), this protein is S-adenosylmethionine:tRNA ribosyltransferase-isomerase.